A 245-amino-acid chain; its full sequence is Eukaryotic translation initiation factor 4E type 2 (245 aa).

Over residues 1 to 38 (MNNKFDALKDDDSGDHDQNEENSTQKDGEKEKTDRDKS) the composition is skewed to basic and acidic residues. The disordered stretch occupies residues 1-52 (MNNKFDALKDDDSGDHDQNEENSTQKDGEKEKTDRDKSQSSGKRKAVVPGPA). Phosphoserine is present on Ser-13. The segment at 54–57 (HPLQ) is EIF4EBP1/2/3 binding. 78–79 (YE) contacts mRNA. Positions 95–99 (WKFYS) are EIF4EBP1/2/3 binding. MRNA contacts are provided by residues His-110 and 124–125 (WE). Lys-134 is modified (N6-acetyllysine; alternate). Residue Lys-134 forms a Glycyl lysine isopeptide (Lys-Gly) (interchain with G-Cter in ISG15); alternate linkage. Positions 150-157 (NLILAMLG) are EIF4EBP1/2/3 binding. MRNA contacts are provided by residues 174–179 (RFQEDI) and 222–224 (KMP). Lys-222 participates in a covalent cross-link: Glycyl lysine isopeptide (Lys-Gly) (interchain with G-Cter in ISG15).

It belongs to the eukaryotic initiation factor 4E family. In terms of assembly, interacts with EIF4EBP1, EIF4EBP2 and EIF4EBP3. Does not interact with eIF4G (EIF4G1, EIF4G2 or EIF4G3). Component of the 4EHP-GYF2 complex, at least composed of EIF4E2, GIGYF2 and ZNF598. Interacts with GIGYF2 (via the 4EHP-binding motif); the interaction is direct. Interacts with EIF4ENIF1/4E-T (via YXXXXLphi motif); increasing affinity for the 7-methylguanosine-containing mRNA cap. Post-translationally, ubiquitinated by ARIH1. The consequences of ubiquitination are however unclear: according to a report, EIF4E2 ubiquitination leads to promote EIF4E2 cap-binding and protein translation arrest. According to another report ubiquitination leads to its subsequent degradation. In terms of processing, ISGylation enhances its cap structure-binding activity and translation-inhibition activity. As to expression, widely expressed with highest levels in testis, kidney and liver.

The protein resides in the cytoplasm. It is found in the P-body. In terms of biological role, recognizes and binds the 7-methylguanosine-containing mRNA cap during an early step in the initiation. Acts as a repressor of translation initiation. In contrast to EIF4E, it is unable to bind eIF4G (EIF4G1, EIF4G2 or EIF4G3), suggesting that it acts by competing with EIF4E and block assembly of eIF4F at the cap. In P-bodies, component of a complex that promotes miRNA-mediated translational repression. Involved in virus-induced host response by mediating miRNA MIR34A-induced translational silencing which controls IFNB1 production by a negative feedback mechanism. Component of the 4EHP-GYF2 complex, a multiprotein complex that acts as a repressor of translation initiation. In association with GIGYF2, assists ribosome-associated quality control (RQC) by sequestering the mRNA cap, blocking ribosome initiation and decreasing the translational load on problematic messages. Part of a pathway that works in parallel to RQC-mediated degradation of the stalled nascent polypeptide. GIGYF2 and EIF4E2 work downstream and independently of ZNF598, which seems to work as a scaffold that can recruit them to faulty mRNA even if alternative recruitment mechanisms may exist. The protein is Eukaryotic translation initiation factor 4E type 2 of Mus musculus (Mouse).